We begin with the raw amino-acid sequence, 138 residues long: ATP synthase epsilon chain (138 aa).

It belongs to the ATPase epsilon chain family. F-type ATPases have 2 components, CF(1) - the catalytic core - and CF(0) - the membrane proton channel. CF(1) has five subunits: alpha(3), beta(3), gamma(1), delta(1), epsilon(1). CF(0) has three main subunits: a, b and c.

The protein localises to the cellular thylakoid membrane. In terms of biological role, produces ATP from ADP in the presence of a proton gradient across the membrane. The polypeptide is ATP synthase epsilon chain (Cyanothece sp. (strain PCC 7425 / ATCC 29141)).